Reading from the N-terminus, the 331-residue chain is UPF0194 membrane protein YbhG (331 aa).

The signal sequence occupies residues methionine 1–alanine 15. Positions glutamate 107–alanine 208 form a coiled coil.

It belongs to the UPF0194 family.

Its subcellular location is the periplasm. This is UPF0194 membrane protein YbhG from Escherichia coli O139:H28 (strain E24377A / ETEC).